The sequence spans 210 residues: T-cell surface glycoprotein CD8 beta chain (210 aa).

Residues 1 to 21 (MQPGLWLLLATQLAALRGSSV) form the signal peptide. One can recognise an Ig-like V-type domain in the interval 22-132 (LQQAPGSVMV…ELTFGKGTRL (111 aa)). At 22-170 (LQQAPGSVMV…VTQKGPSCGL (149 aa)) the chain is on the extracellular side. A disulfide bridge links Cys41 with Cys116. Asn102 carries an N-linked (GlcNAc...) asparagine glycan. The tract at residues 139 to 161 (PTNSQPTKKPTPRKKMCRPPSPV) is disordered. A helical membrane pass occupies residues 171–191 (LTLGLLVAGVLVLLVSLGVAI). Residues 192–210 (HLYRLKRRARLRLLKQFYK) lie on the Cytoplasmic side of the membrane.

In terms of assembly, forms disulfide-linked heterodimers with CD8A at the cell surface. Interacts with CD3D; this interaction couples TCR-CD3 with CD8. Interacts with LCK. Phosphorylated as a consequence of T-cell activation. In terms of processing, palmitoylated at the cytoplasmic tail and thereby targets the heterodimer CD8A/CD8B to lipid rafts unlike CD8A homodimers.

It is found in the cell membrane. Functionally, integral membrane glycoprotein that plays an essential role in the immune response and serves multiple functions in responses against both external and internal offenses. In T-cells, functions primarily as a coreceptor for MHC class I molecule:peptide complex. The antigens presented by class I peptides are derived from cytosolic proteins while class II derived from extracellular proteins. Interacts simultaneously with the T-cell receptor (TCR) and the MHC class I proteins presented by antigen presenting cells (APCs). In turn, recruits the Src kinase LCK to the vicinity of the TCR-CD3 complex. A palmitoylation site in the cytoplasmic tail of CD8B chain contributes to partitioning of CD8 into the plasma membrane lipid rafts where signaling proteins are enriched. Once LCK recruited, it initiates different intracellular signaling pathways by phosphorylating various substrates ultimately leading to lymphokine production, motility, adhesion and activation of cytotoxic T-lymphocytes (CTLs). Additionally, plays a critical role in thymic selection of CD8+ T-cells. The sequence is that of T-cell surface glycoprotein CD8 beta chain (CD8B) from Felis catus (Cat).